The following is an 89-amino-acid chain: Small ribosomal subunit protein uS14 (89 aa).

Belongs to the universal ribosomal protein uS14 family. Part of the 30S ribosomal subunit. Contacts proteins S3 and S10.

Functionally, binds 16S rRNA, required for the assembly of 30S particles and may also be responsible for determining the conformation of the 16S rRNA at the A site. This is Small ribosomal subunit protein uS14 from Chlorobium luteolum (strain DSM 273 / BCRC 81028 / 2530) (Pelodictyon luteolum).